Consider the following 282-residue polypeptide: MSSYANHQALAGLTLGKSTDYRDTYDASLLQGVPRSLNRDPLGLKADNLPFHGTDIWTLYELSWLNAKGLPQVAVGHVELDYTSVNLIESKSFKLYLNSFNQTRFNNWDEVRQTLERDLSTCAQGKISVALYRLDELEGQPIGHFNGTCIDDQDITIDNYEFTTDYLENATSGEKVVEETLVSHLLKSNCLITHQPDWGSIQIQYRGRQIDREKLLRYLVSFRHHNEFHEQCVERIFNDLLRFCQPEKLSVYARYTRRGGLDINPWRSNSDFVPSTTRLVRQ.

88-90 (IES) provides a ligand contact to substrate. Position 90–91 (90–91 (SK)) interacts with NADPH. The active-site Thioimide intermediate is the Cys-190. Asp-197 serves as the catalytic Proton donor. A substrate-binding site is contributed by 229–230 (HE). Position 258–259 (258–259 (RG)) interacts with NADPH.

Belongs to the GTP cyclohydrolase I family. QueF type 2 subfamily. As to quaternary structure, homodimer.

The protein localises to the cytoplasm. The catalysed reaction is 7-aminomethyl-7-carbaguanine + 2 NADP(+) = 7-cyano-7-deazaguanine + 2 NADPH + 3 H(+). Its pathway is tRNA modification; tRNA-queuosine biosynthesis. In terms of biological role, catalyzes the NADPH-dependent reduction of 7-cyano-7-deazaguanine (preQ0) to 7-aminomethyl-7-deazaguanine (preQ1). The chain is NADPH-dependent 7-cyano-7-deazaguanine reductase from Shigella flexneri serotype 5b (strain 8401).